Consider the following 257-residue polypeptide: Flap endonuclease Xni (257 aa).

D109 contributes to the Mg(2+) binding site. The 5'-3' exonuclease domain occupies 165–254; the sequence is VKPEQLADYW…GFNLQDIRYE (90 aa). 4 residues coordinate K(+): L176, P185, I187, and I190. Positions 189–194 are interaction with DNA; that stretch reads GIGPKA.

It belongs to the Xni family. The cofactor is Mg(2+). K(+) serves as cofactor.

In terms of biological role, has flap endonuclease activity. During DNA replication, flap endonucleases cleave the 5'-overhanging flap structure that is generated by displacement synthesis when DNA polymerase encounters the 5'-end of a downstream Okazaki fragment. This is Flap endonuclease Xni from Vibrio atlanticus (strain LGP32) (Vibrio splendidus (strain Mel32)).